Here is a 575-residue protein sequence, read N- to C-terminus: Serine/threonine-protein kinase STY46 (575 aa).

Residues 116 to 140 (ADLDSTSNDAGHSSPTRKSIHPPPA) are disordered. A compositionally biased stretch (polar residues) spans 118–132 (LDSTSNDAGHSSPTR). One can recognise an ACT domain in the interval 178–252 (EITFSTEDKP…AKIELQSQSW (75 aa)). The region spanning 290–543 (LKFGHKIASG…EIIEQLQEIA (254 aa)) is the Protein kinase domain. ATP is bound by residues 296–304 (IASGSYGDL) and Lys-317. The active-site Proton acceptor is the Asp-411. Thr-443 is subject to Phosphothreonine.

It belongs to the protein kinase superfamily. Ser/Thr protein kinase family. Autophosphorylated on serine and threonine residues. Autophosphorylated at Thr-443.

It localises to the cytoplasm. The protein localises to the cytosol. It catalyses the reaction L-seryl-[protein] + ATP = O-phospho-L-seryl-[protein] + ADP + H(+). It carries out the reaction L-threonyl-[protein] + ATP = O-phospho-L-threonyl-[protein] + ADP + H(+). Its activity is regulated as follows. Activated by autophosphorylation at Thr-443. Serine/threonine protein kinase that specifically phosphorylates chloroplast precursor proteins in the cytosol within the cleavable presequences (transit peptides). May be part of a cytosolic regulatory network involved in chloroplast protein import. Does not phosphorylate mitochondrion precursor proteins. Specific for ATP and does not utilize other NTPs. Plays a role in chloroplast biogenesis and differentiation in cotyledons, possibly through phosphorylation of chloroplast preproteins. This Arabidopsis thaliana (Mouse-ear cress) protein is Serine/threonine-protein kinase STY46.